The primary structure comprises 397 residues: Endoglucanase (397 aa).

Glu194 functions as the Proton donor in the catalytic mechanism. Catalysis depends on Glu317, which acts as the Nucleophile.

The protein belongs to the glycosyl hydrolase 5 (cellulase A) family.

The catalysed reaction is Endohydrolysis of (1-&gt;4)-beta-D-glucosidic linkages in cellulose, lichenin and cereal beta-D-glucans.. In Paenibacillus polymyxa (Bacillus polymyxa), this protein is Endoglucanase.